A 281-amino-acid polypeptide reads, in one-letter code: Ribosomal RNA small subunit methyltransferase A (281 aa).

The S-adenosyl-L-methionine site is built by asparagine 21, leucine 23, glycine 48, glutamate 69, aspartate 92, and asparagine 113.

It belongs to the class I-like SAM-binding methyltransferase superfamily. rRNA adenine N(6)-methyltransferase family. RsmA subfamily.

It is found in the cytoplasm. It catalyses the reaction adenosine(1518)/adenosine(1519) in 16S rRNA + 4 S-adenosyl-L-methionine = N(6)-dimethyladenosine(1518)/N(6)-dimethyladenosine(1519) in 16S rRNA + 4 S-adenosyl-L-homocysteine + 4 H(+). In terms of biological role, specifically dimethylates two adjacent adenosines (A1518 and A1519) in the loop of a conserved hairpin near the 3'-end of 16S rRNA in the 30S particle. May play a critical role in biogenesis of 30S subunits. This Ralstonia nicotianae (strain ATCC BAA-1114 / GMI1000) (Ralstonia solanacearum) protein is Ribosomal RNA small subunit methyltransferase A.